The sequence spans 528 residues: Gamma-taxilin (528 aa).

The span at 1-10 shows a compositional bias: basic and acidic residues; it reads MATRVEEAAR. Positions 1–36 are disordered; that stretch reads MATRVEEAARGRGGGAEEATEAGRGGRRRSPRQKFE. Omega-N-methylarginine is present on residues Arg-12 and Arg-24. A phosphoserine mark is found at Ser-79, Ser-86, Ser-97, and Ser-105. A disordered region spans residues 102 to 130; the sequence is TQESREEIPGGEARTDPPDGQQDSECNRN. Over residues 104–118 the composition is skewed to basic and acidic residues; it reads ESREEIPGGEARTDP. Positions 153 to 464 form a coiled coil; the sequence is EEKLAALCKK…LKEQVSIKAA (312 aa). Residue Tyr-283 is modified to Phosphotyrosine. The disordered stretch occupies residues 486 to 528; that stretch reads HKELNTSSKRALGAHLEAEPKSQRSAVQKPPSTGSAPAIESVD. Positions 508 to 520 are enriched in polar residues; sequence QRSAVQKPPSTGS. Ser-517 is subject to Phosphoserine.

The protein belongs to the taxilin family. As to quaternary structure, binds to the C-terminal coiled coil region of syntaxin family members STX1A, STX3A and STX4A. Forms a heterodimer with ATF4 in osteoblasts. As to expression, ubiquitously expressed. Expressed at high level in heart and skeletal muscle. Expressed in brain, placenta, lung, liver, kidney and pancreas.

Its subcellular location is the nucleus membrane. The protein resides in the cytoplasm. The protein localises to the cytosol. May be involved in intracellular vesicle traffic. Inhibits ATF4-mediated transcription, possibly by dimerizing with ATF4 to form inactive dimers that cannot bind DNA. May be involved in regulating bone mass density through an ATF4-dependent pathway. May be involved in cell cycle progression. This chain is Gamma-taxilin (TXLNG), found in Homo sapiens (Human).